Reading from the N-terminus, the 66-residue chain is Large ribosomal subunit protein bL32 (66 aa).

The interval 1–20 (MAVPKRRKSKSKVRTKRAHH) is disordered.

The protein belongs to the bacterial ribosomal protein bL32 family.

The polypeptide is Large ribosomal subunit protein bL32 (Leptospira borgpetersenii serovar Hardjo-bovis (strain JB197)).